An 86-amino-acid polypeptide reads, in one-letter code: MSKICQITGKKAMIGNNVSHSKRRTKRTFDLNLFNKKFYYVEQDCWISLSLCAAGLRIINKKGLDAALNDAVAKGYCDWKTIKVVG.

Belongs to the bacterial ribosomal protein bL28 family.

The sequence is that of Large ribosomal subunit protein bL28 from Bacteroides fragilis (strain ATCC 25285 / DSM 2151 / CCUG 4856 / JCM 11019 / LMG 10263 / NCTC 9343 / Onslow / VPI 2553 / EN-2).